The sequence spans 317 residues: Beta-ketoacyl-[acyl-carrier-protein] synthase III (317 aa).

Residues C112 and H244 contribute to the active site. The tract at residues Q245–R249 is ACP-binding. N274 is a catalytic residue.

Belongs to the thiolase-like superfamily. FabH family. As to quaternary structure, homodimer.

Its subcellular location is the cytoplasm. The enzyme catalyses malonyl-[ACP] + acetyl-CoA + H(+) = 3-oxobutanoyl-[ACP] + CO2 + CoA. It functions in the pathway lipid metabolism; fatty acid biosynthesis. Catalyzes the condensation reaction of fatty acid synthesis by the addition to an acyl acceptor of two carbons from malonyl-ACP. Catalyzes the first condensation reaction which initiates fatty acid synthesis and may therefore play a role in governing the total rate of fatty acid production. Possesses both acetoacetyl-ACP synthase and acetyl transacylase activities. Its substrate specificity determines the biosynthesis of branched-chain and/or straight-chain of fatty acids. The protein is Beta-ketoacyl-[acyl-carrier-protein] synthase III of Salmonella paratyphi B (strain ATCC BAA-1250 / SPB7).